A 735-amino-acid polypeptide reads, in one-letter code: DNA replication licensing factor mcm5 (735 aa).

Residues 332–538 (IYETVAKSIA…RDMTLAKHVM (207 aa)) enclose the MCM domain. Position 372 (arginine 372) interacts with ADP. The Arginine finger motif lies at 513-516 (SRFD).

It belongs to the MCM family. As to quaternary structure, component of the mcm2-7 complex (RLF-M). The complex forms a toroidal hexameric ring with the proposed subunit order mcm2-mcm6-mcm4-mcm7-mcm3-mcm5. The heterodimer of mmcm3/mcm5 interacts with mcm4, mmcm6, mcm7 and weakly with mcm2. Component of the CMG helicase complex, composed of the mcm2-7 complex, the GINS complex and cdc45.

The protein localises to the nucleus. It localises to the chromosome. The catalysed reaction is ATP + H2O = ADP + phosphate + H(+). Its function is as follows. Acts as a component of the MCM2-7 complex (MCM complex) which is the replicative helicase essential for 'once per cell cycle' DNA replication initiation and elongation in eukaryotic cells. Core component of CDC45-MCM-GINS (CMG) helicase, the molecular machine that unwinds template DNA during replication, and around which the replisome is built. The active ATPase sites in the MCM2-7 ring are formed through the interaction surfaces of two neighboring subunits such that a critical structure of a conserved arginine finger motif is provided in trans relative to the ATP-binding site of the Walker A box of the adjacent subunit. The six ATPase active sites, however, are likely to contribute differentially to the complex helicase activity. The polypeptide is DNA replication licensing factor mcm5 (Xenopus tropicalis (Western clawed frog)).